Reading from the N-terminus, the 506-residue chain is Protein CYCLOPS (506 aa).

Disordered regions lie at residues 193–223 and 385–434; these read TVNS…LDNP and KENL…RSST. The span at 202-219 shows a compositional bias: low complexity; the sequence is TPSQTPTFVSPSSSSTSP. Residues 385-394 are compositionally biased toward basic and acidic residues; that stretch reads KENLKDDRKK. Residues 415–418 carry the Nuclear localization signal motif; it reads KKRR. Residues 422–432 show a composition bias toward basic and acidic residues; that stretch reads SRKMAEAKERS. Residues 441-506 are a coiled coil; sequence IQVVLKRCET…IERIVSDTNT (66 aa).

It belongs to the CYCLOPS family. Highly epressed in roots. Expressed at very low levels in leaves, stems and panicles.

It localises to the nucleus. Functionally, involved in arbuscular mycorrhizal (AM) symbiosis. Required for fungal infection in roots and arbuscule development during AM symbiosis. This chain is Protein CYCLOPS, found in Oryza sativa subsp. japonica (Rice).